Reading from the N-terminus, the 104-residue chain is Inclusion membrane protein F (104 aa).

A run of 2 helical transmembrane segments spans residues 39 to 59 and 70 to 90; these read LVVA…SLVA and LAVL…VLFI.

Its subcellular location is the secreted. It is found in the host vacuole. The protein resides in the host pathogen-containing vacuole. It localises to the host pathogen-containing vacuole membrane. In terms of biological role, inclusion membrane protein probably involved in early modification events of the chlamydial inclusion. This chain is Inclusion membrane protein F (incF), found in Chlamydia trachomatis serovar D (strain ATCC VR-885 / DSM 19411 / UW-3/Cx).